A 289-amino-acid polypeptide reads, in one-letter code: MRHIICHGGVITEEMAASLLDQLIEEVLADNLPPPSHFEPPTLHELYDLDVTAPEDPNEEAVSQIFPDSVMLAVQEGIDLLTFPPAPGSPEPPHLSRQPEQPEQRALGPVSMPNLVPEVIDLTCHEAGFPPSDDEDEEGEEFVLDYVEHPGHGCRSCHYHRRNTGDPDIMCSLCYMRTCGMFVYSPVSEPEPEPEPEPEPARPTRRPKMAPAILRRPTSPVSRECNSSTDSCDSGPSNTPPEIHPVVPLCPIKPVAVRVGGRRQAVECIEDLLNEPGQPLDLSCKRPRP.

The tract at residues 41 to 49 (PTLHELYDL) is interaction with RB1 in competition with E2F1. Residues 76–140 (EGIDLLTFPP…PSDDEDEEGE (65 aa)) form an interaction with UBE2I region. A disordered region spans residues 82-107 (TFPPAPGSPEPPHLSRQPEQPEQRAL). Residues 84–93 (PPAPGSPEPP) are compositionally biased toward pro residues. Phosphoserine; by host is present on serine 89. A PXLXP motif, interaction with host ZMYND11 motif is present at residues 113 to 117 (PNLVP). The LXCXE motif, interaction with host RB1 and TMEM173/STING signature appears at 122–126 (LTCHE). The segment at 154 to 174 (CRSCHYHRRNTGDPDIMCSLC) is a zinc-finger region. Residues 186–240 (PVSEPEPEPEPEPEPARPTRRPKMAPAILRRPTSPVSRECNSSTDSCDSGPSNTP) are disordered. A phosphoserine; by host mark is found at serine 219 and serine 231. Polar residues predominate over residues 219-237 (SPVSRECNSSTDSCDSGPS). Positions 258–289 (RVGGRRQAVECIEDLLNEPGQPLDLSCKRPRP) match the Bipartite nuclear localization signal motif. The PXDLS motif, CTBP-binding motif lies at 279–283 (PLDLS).

Belongs to the adenoviridae E1A protein family. Interacts with host UBE2I; this interaction interferes with polySUMOylation. Interacts with host RB1; this interaction induces the aberrant dissociation of RB1-E2F1 complex thereby disrupting the activity of RB1 and activating E2F1-regulated genes. Interacts with host ATF7; the interaction enhances ATF7-mediated viral transactivation activity which requires the zinc binding domains of both proteins. Isoform early E1A 32 kDa protein and isoform early E1A 26 kDa protein interact (via N-terminus) with CUL1 and E3 ubiquitin ligase RBX1; these interactions inhibit RBX1-CUL1-dependent elongation reaction of ubiquitin chains and attenuate ubiquitination of SCF(FBXW7) target proteins. Interacts (via PXLXP motif) with host ZMYND11/BS69 (via MYND-type zinc finger); this interaction inhibits E1A mediated transactivation. Interacts with host EP300; this interaction stimulates the acetylation of RB1 by recruiting EP300 and RB1 into a multimeric-protein complex. Interacts with host CTBP1 and CTBP2; this interaction seems to potentiate viral replication. Interacts with host DCAF7 (ref.16). Interacts with host DYRK1A. Interacts with host KPNA4; this interaction allows E1A import into the host nucleus. Interacts with host EP400; this interaction stabilizes MYC. Interacts with host TBP protein; this interaction probably disrupts the TBP-TATA complex. Interacts (via LXCXE motif) with host TMEM173/STING; this interaction impairs the ability of TMEM173/STING to sense cytosolic DNA and promote the production of type I interferon (IFN-alpha and IFN-beta). Interacts (via C-terminus) with host ZBED1/hDREF (via C-terminus); the interaction is direct.

Its subcellular location is the host nucleus. In terms of biological role, plays a role in viral genome replication by driving entry of quiescent cells into the cell cycle. Stimulation of progression from G1 to S phase allows the virus to efficiently use the cellular DNA replicating machinery to achieve viral genome replication. E1A protein has both transforming and trans-activating activities. Induces the disassembly of the E2F1 transcription factor from RB1 by direct competition for the same binding site on RB1, with subsequent transcriptional activation of E2F1-regulated S-phase genes and of the E2 region of the adenoviral genome. Release of E2F1 leads to the ARF-mediated inhibition of MDM2 and causes TP53/p53 to accumulate because it is not targeted for degradation by MDM2-mediated ubiquitination anymore. This increase in TP53, in turn, would arrest the cell proliferation and direct its death but this effect is counteracted by the viral protein E1B-55K. Inactivation of the ability of RB1 to arrest the cell cycle is critical for cellular transformation, uncontrolled cellular growth and proliferation induced by viral infection. Interaction with RBX1 and CUL1 inhibits ubiquitination of the proteins targeted by SCF(FBXW7) ubiquitin ligase complex, and may be linked to unregulated host cell proliferation. The tumorigenesis-restraining activity of E1A may be related to the disruption of the host CtBP-CtIP complex through the CtBP binding motif. Interaction with host TMEM173/STING impairs the ability of TMEM173/STING to sense cytosolic DNA and promote the production of type I interferon (IFN-alpha and IFN-beta). Promotes the sumoylation of host ZBED1/hDREF with SUMO1. This chain is Early E1A protein, found in Homo sapiens (Human).